The sequence spans 155 residues: Protein-export protein SecB (155 aa).

The protein belongs to the SecB family. In terms of assembly, homotetramer, a dimer of dimers. One homotetramer interacts with 1 SecA dimer.

It localises to the cytoplasm. Functionally, one of the proteins required for the normal export of preproteins out of the cell cytoplasm. It is a molecular chaperone that binds to a subset of precursor proteins, maintaining them in a translocation-competent state. It also specifically binds to its receptor SecA. This chain is Protein-export protein SecB, found in Escherichia fergusonii (strain ATCC 35469 / DSM 13698 / CCUG 18766 / IAM 14443 / JCM 21226 / LMG 7866 / NBRC 102419 / NCTC 12128 / CDC 0568-73).